The primary structure comprises 264 residues: Thiazole synthase (264 aa).

K106 functions as the Schiff-base intermediate with DXP in the catalytic mechanism. 1-deoxy-D-xylulose 5-phosphate contacts are provided by residues G167, 193 to 194 (AG), and 215 to 216 (NT).

It belongs to the ThiG family. As to quaternary structure, homotetramer. Forms heterodimers with either ThiH or ThiS.

Its subcellular location is the cytoplasm. The enzyme catalyses [ThiS sulfur-carrier protein]-C-terminal-Gly-aminoethanethioate + 2-iminoacetate + 1-deoxy-D-xylulose 5-phosphate = [ThiS sulfur-carrier protein]-C-terminal Gly-Gly + 2-[(2R,5Z)-2-carboxy-4-methylthiazol-5(2H)-ylidene]ethyl phosphate + 2 H2O + H(+). Its pathway is cofactor biosynthesis; thiamine diphosphate biosynthesis. Catalyzes the rearrangement of 1-deoxy-D-xylulose 5-phosphate (DXP) to produce the thiazole phosphate moiety of thiamine. Sulfur is provided by the thiocarboxylate moiety of the carrier protein ThiS. In vitro, sulfur can be provided by H(2)S. The polypeptide is Thiazole synthase (Stenotrophomonas maltophilia (strain K279a)).